The sequence spans 1495 residues: Chromosome partition protein MukB (1495 aa).

60–67 serves as a coordination point for ATP; the sequence is GGNGAGKS. Coiled-coil stretches lie at residues 322 to 693, 861 to 1140, and 1233 to 1289; these read RART…SQPD, EDVM…AKVS, and IDAI…LQNI. The segment at 692–809 is flexible hinge; sequence PDGSEDARLN…EIPLFGRAAR (118 aa).

This sequence belongs to the SMC family. MukB subfamily. In terms of assembly, homodimerization via its hinge domain. Binds to DNA via its C-terminal region. Interacts, and probably forms a ternary complex, with MukE and MukF via its C-terminal region. The complex formation is stimulated by calcium or magnesium. Interacts with tubulin-related protein FtsZ.

The protein localises to the cytoplasm. The protein resides in the nucleoid. Plays a central role in chromosome condensation, segregation and cell cycle progression. Functions as a homodimer, which is essential for chromosome partition. Involved in negative DNA supercoiling in vivo, and by this means organize and compact chromosomes. May achieve or facilitate chromosome segregation by condensation DNA from both sides of a centrally located replisome during cell division. This is Chromosome partition protein MukB from Pasteurella multocida (strain Pm70).